The primary structure comprises 550 residues: Zorya protein ZorA (550 aa).

A run of 3 helical transmembrane segments spans residues 16–36 (TLIT…AWWC), 52–72 (LMGA…LLNF), and 92–112 (FITS…DAFF).

This sequence belongs to the MotA family.

It localises to the cell inner membrane. Component of antiviral defense system Zorya type II, composed of ZorA, ZorB and ZorE. Expression of Zorya type II in E.coli (strain MG1655) confers resistance to phages SECphi7 and T7. While most T7 infected Zorya-containing cells undergo abortive infection, a minority produce viable phage progeny. These eventually accumulate to a high multiplicity of infection, leading to culture collapse by 170 minutes after initial infection. ZorA and ZorB probably assemble in the cell inner membrane and exert their effect there. This chain is Zorya protein ZorA, found in Escherichia coli (strain ATCC 8739 / DSM 1576 / NBRC 3972 / NCIMB 8545 / WDCM 00012 / Crooks).